The following is a 39-amino-acid chain: Decorsin (39 aa).

The interval 27-38 (CRFPRGDADPYC) is high affinity binding domain. A Cell attachment site motif is present at residues 31 to 33 (RGD).

The protein belongs to the ornatin family.

It localises to the secreted. In terms of biological role, inhibits fibrinogen interaction with platelet receptors expressed on glycoprotein IIb-IIIa complex. May prevent blood from clotting during either feeding and/or storage of ingested blood. This chain is Decorsin, found in Macrobdella decora (North American leech).